A 79-amino-acid chain; its full sequence is Orally active insecticidal peptide (79 aa).

An N-terminal signal peptide occupies residues 1–19; that stretch reads MRVLFIIAGLALLSVVCYT. Residues 20-44 constitute a propeptide that is removed on maturation; the sequence is SEMKERSSFNEVLSEFFAADEPQER. Cystine bridges form between Cys46-Cys61, Cys53-Cys66, and Cys60-Cys73. An Alanine amide modification is found at Ala77.

This sequence belongs to the neurotoxin 03 (Tx2) family. 01 subfamily. As to expression, expressed by the venom gland.

It localises to the secreted. In terms of biological role, probable ion channel inhibitor. Shows insecticidal activity when injected into mealworms. The sequence is that of Orally active insecticidal peptide from Selenotypus plumipes (Australian featherleg tarantula).